The chain runs to 546 residues: Src substrate cortactin (546 aa).

Residues 1–28 (MWKASAGHAVSITQDDGGADDWETDPDF) are disordered. A compositionally biased stretch (acidic residues) spans 17-28 (GGADDWETDPDF). Cortactin repeat units follow at residues 80–116 (ASHG…SQVD), 117–153 (SVRG…SQKD), 154–190 (YSSG…SQKD), 191–227 (YSKG…SQKD), 228–264 (YVKG…SQKD), and 265–301 (YKTG…SQQD). 2 positions are modified to N6-acetyllysine: K87 and K107. The residue at position 113 (S113) is a Phosphoserine. At R119 the chain carries Omega-N-methylarginine. An N6-acetyllysine modification is found at K124. The residue at position 144 (K144) is an N6-acetyllysine; alternate. A Glycyl lysine isopeptide (Lys-Gly) (interchain with G-Cter in SUMO1); alternate cross-link involves residue K144. Residue K144 forms a Glycyl lysine isopeptide (Lys-Gly) (interchain with G-Cter in SUMO2); alternate linkage. Residue S150 is modified to Phosphoserine. 3 positions are modified to N6-acetyllysine: K152, K161, and K171. K181 is modified (N6-acetyllysine; alternate). Residue K181 forms a Glycyl lysine isopeptide (Lys-Gly) (interchain with G-Cter in SUMO1); alternate linkage. K181 participates in a covalent cross-link: Glycyl lysine isopeptide (Lys-Gly) (interchain with G-Cter in SUMO2); alternate. N6-acetyllysine occurs at positions 193 and 198. K218 is covalently cross-linked (Glycyl lysine isopeptide (Lys-Gly) (interchain with G-Cter in SUMO1)). An N6-acetyllysine modification is found at K235. A Phosphoserine modification is found at S261. K272 is subject to N6-acetyllysine. Residue K295 is modified to N6-acetyllysine; alternate. K295 is covalently cross-linked (Glycyl lysine isopeptide (Lys-Gly) (interchain with G-Cter in SUMO2); alternate). One copy of the Cortactin 7; truncated repeat lies at 302–324 (YAKGFGGKYGVQKDRMDKNASTF). K304, K309, K314, and K346 each carry N6-acetyllysine. Positions 348 to 401 (SNIRANFENLAKEREQEDRRKAEAERAQRMAKERQEQEEARRKLEEQARAKKQT) form a coiled coil. Positions 355–424 (ENLAKEREQE…PPSSPIYEDA (70 aa)) are disordered. The span at 357 to 396 (LAKEREQEDRRKAEAERAQRMAKERQEQEEARRKLEEQAR) shows a compositional bias: basic and acidic residues. T401 carries the phosphothreonine modification. Residues S405, S407, S417, and S418 each carry the phosphoserine modification. A phosphotyrosine mark is found at Y421 and Y442. Position 443 is a phosphoserine (S443). Residue Y466 is modified to Phosphotyrosine; by FAK1. Phosphotyrosine; by SRC is present on residues Y482 and Y485. Residues 488–546 (DLGITAIALYDYQAAGDDEISFDPDDIITNIEMIDDGWWRGVCKGRYGLFPANYVELRQ) enclose the SH3 domain.

In terms of assembly, part of a complex composed of NEDD9, AURKA and CTTN; within the complex NEDD9 acts as a scaffold protein and is required for complex formation. Interacts (via N-terminus) with NEDD9. Identified in a complex containing FGFR4, NCAM1, CDH2, PLCG1, FRS2, SRC, SHC1, GAP43 and CTTN. Forms a complex with ABL1 and MYLK. Interacts with SHANK2 and SHANK3 (via its SH3 domain). Interacts with PLXDC2 and SRCIN1. Interacts with SAMSN1 (via SH3 domain). Interacts (via SH3 domain) with ASAP1 (via Pro-rich region). Interacts (via SH3 domain) with DNM2. Interacts with ACTN1. Interacts with FER. Interacts with KCNA2 (via non-phosphorylated C-terminus). Interacts with FGD1. Interacts with ABL2. Interacts with CTTNBP2NL; this interaction may target CTTN to stress fibers. Interacts with CTTNBP2; this interaction may target CTTN at the cell cortex or dendritic spines. Interacts with KCNH1. Interacts (via SH3 domain) with DIP2A (via N-terminus); the interaction enhances CTTN acetylation and is required for proper synaptic transmission. Interacts with XIRP1 (via N-terminus); the interaction promotes CTTN localization to intercalated disks in cardiomyocytes. In terms of processing, acetylated. Phosphorylated by FER. Phosphorylated in response to FGR activation. Phosphorylation by SRC promotes MYLK binding. Phosphorylated on tyrosine residues in response to CHRM1 activation. Phosphorylated by PTK2/FAK1 in response to cell adhesion. Tyrosine phosphorylation in transformed cells may contribute to cellular growth regulation and transformation. Phosphorylated by PKN2 at both serine and threonine residues in a GTP-bound Rac1-dependent manner in hyaluronan-induced astrocytes and hence down-regulated CTTN ability to associate with filamentous actin. Expressed at intercalated disks in the heart (at protein level). Expressed in most tissues, except in B-lymphocytes or plasma cells.

It is found in the cytoplasm. The protein resides in the cytoskeleton. Its subcellular location is the cell projection. It localises to the lamellipodium. The protein localises to the ruffle. It is found in the dendrite. The protein resides in the cell membrane. Its subcellular location is the podosome. It localises to the cell junction. The protein localises to the focal adhesion. It is found in the membrane. The protein resides in the clathrin-coated pit. Its subcellular location is the dendritic spine. It localises to the cell cortex. The protein localises to the endoplasmic reticulum. Its function is as follows. Contributes to the organization of the actin cytoskeleton and cell shape. Plays a role in the formation of lamellipodia and in cell migration. Plays a role in the regulation of neuron morphology, axon growth and formation of neuronal growth cones. Through its interaction with CTTNBP2, involved in the regulation of neuronal spine density. Plays a role in focal adhesion assembly and turnover. In complex with ABL1 and MYLK regulates cortical actin-based cytoskeletal rearrangement critical to sphingosine 1-phosphate (S1P)-mediated endothelial cell (EC) barrier enhancement. Plays a role in intracellular protein transport and endocytosis, and in modulating the levels of potassium channels present at the cell membrane. Plays a role in receptor-mediated endocytosis via clathrin-coated pits. Required for stabilization of KCNH1 channels at the cell membrane. The chain is Src substrate cortactin (Cttn) from Mus musculus (Mouse).